We begin with the raw amino-acid sequence, 69 residues long: DNA gyrase inhibitor YacG (69 aa).

Cys7, Cys10, Cys26, and Cys30 together coordinate Zn(2+).

It belongs to the DNA gyrase inhibitor YacG family. Interacts with GyrB. Requires Zn(2+) as cofactor.

Its function is as follows. Inhibits all the catalytic activities of DNA gyrase by preventing its interaction with DNA. Acts by binding directly to the C-terminal domain of GyrB, which probably disrupts DNA binding by the gyrase. The sequence is that of DNA gyrase inhibitor YacG from Shewanella putrefaciens (strain CN-32 / ATCC BAA-453).